A 561-amino-acid chain; its full sequence is Asparagine synthetase [glutamine-hydrolyzing] (561 aa).

Residue C2 is the For GATase activity of the active site. The region spanning 2 to 191 (CGIWALFGSD…PGHYEVLDLK (190 aa)) is the Glutamine amidotransferase type-2 domain. L-glutamine is bound by residues 49–53 (RLAVV), 75–77 (NGE), and D97. The Asparagine synthetase domain occupies 213-536 (HALYDSVEKL…PGRADWLTHY (324 aa)). ATP contacts are provided by residues L256, I288, and 363-364 (SG). The residue at position 385 (K385) is an N6-acetyllysine. The residue at position 545 (T545) is a Phosphothreonine. S557 carries the post-translational modification Phosphoserine.

The catalysed reaction is L-aspartate + L-glutamine + ATP + H2O = L-asparagine + L-glutamate + AMP + diphosphate + H(+). The protein operates within amino-acid biosynthesis; L-asparagine biosynthesis; L-asparagine from L-aspartate (L-Gln route): step 1/1. This chain is Asparagine synthetase [glutamine-hydrolyzing] (ASNS), found in Cricetulus griseus (Chinese hamster).